Reading from the N-terminus, the 645-residue chain is MSVINCEEVKRDEFHTEKYYESYNIFGAHIVTEDEMRGVRFTVWAPHAKAMSVVGDFNEWDYEQHKMLQVTEEGIWSLFIPHIEEREIYKYAIETMAGDVIFKADPYAVYAEVRPNTASVVFDIKGYEWNDKNWSRKKKKKSVYKEAMTVYELHFGSWKKKEDGTLYSYREMAEELIPYVVEHQFTHIEIMPLVEHPYDRSWGYQGTGYYAATSRFGTPYDLMHFVDECHKYGIGVILDWVPGHFCKDAHGLYLFDGTPTYEYKDKDVQENPVWGTVNFDLGKREVRNFLISNALFWMRYFHIDGFRVDAVANMLYWNKEGQEQSNEHAVSFLRELNEAVFAEDEDFLMTAEDSTAWPLVTAPTYEGGLGFNYKWNMGWMNDVLKYMECAPEYRKYIHDKMTFSLLYAYSENFILPLSHDEVVHGKKSLLNKMPGDYWDKFAQLRLLYGYFFTHPGKKLLFMGGEFGQFDEWKDLEDLDWNLHDFEMHRYMHDYFKELIALYKRSKPLWQLDHSREGFQWIDANNNEQSIFSFIRQGDKQEDALVVVCNFTKATYENYKVGVPDFEYYNEILNSDAEQYGGSGQVNKKRLKTIQEPYHNQTAHVEITIPPFGVSILRPVKTRKGSKKQDGSKTKVRSNVTSRGKR.

Residue aspartate 309 is the Nucleophile of the active site. Glutamate 352 functions as the Proton donor in the catalytic mechanism. Residues 619–645 are disordered; it reads VKTRKGSKKQDGSKTKVRSNVTSRGKR. The segment covering 636 to 645 has biased composition (polar residues); the sequence is RSNVTSRGKR.

Belongs to the glycosyl hydrolase 13 family. GlgB subfamily. In terms of assembly, monomer.

The enzyme catalyses Transfers a segment of a (1-&gt;4)-alpha-D-glucan chain to a primary hydroxy group in a similar glucan chain.. It functions in the pathway glycan biosynthesis; glycogen biosynthesis. In terms of biological role, catalyzes the formation of the alpha-1,6-glucosidic linkages in glycogen by scission of a 1,4-alpha-linked oligosaccharide from growing alpha-1,4-glucan chains and the subsequent attachment of the oligosaccharide to the alpha-1,6 position. This Bacillus cereus (strain AH820) protein is 1,4-alpha-glucan branching enzyme GlgB.